A 177-amino-acid polypeptide reads, in one-letter code: uncharacterized protein (177 aa).

Low complexity-rich tracts occupy residues 78–93 and 120–130; these read NNNN…NTNN and SDVNSNNNNGN. The segment at 78–146 is disordered; that stretch reads NNNNNNNNTI…NKKLKKDGTN (69 aa). Residues 131–146 show a composition bias toward basic residues; the sequence is HQKKKINKKLKKDGTN.

This is an uncharacterized protein from Dictyostelium discoideum (Social amoeba).